The sequence spans 274 residues: 3-methyl-2-oxobutanoate hydroxymethyltransferase (274 aa).

Positions 44 and 83 each coordinate Mg(2+). Residues 44–45, Asp83, and Lys113 each bind 3-methyl-2-oxobutanoate; that span reads DS. Glu115 contacts Mg(2+). The Proton acceptor role is filled by Glu182.

It belongs to the PanB family. In terms of assembly, homodecamer; pentamer of dimers. The cofactor is Mg(2+).

It localises to the cytoplasm. The catalysed reaction is 3-methyl-2-oxobutanoate + (6R)-5,10-methylene-5,6,7,8-tetrahydrofolate + H2O = 2-dehydropantoate + (6S)-5,6,7,8-tetrahydrofolate. The protein operates within cofactor biosynthesis; (R)-pantothenate biosynthesis; (R)-pantoate from 3-methyl-2-oxobutanoate: step 1/2. Its function is as follows. Catalyzes the reversible reaction in which hydroxymethyl group from 5,10-methylenetetrahydrofolate is transferred onto alpha-ketoisovalerate to form ketopantoate. This chain is 3-methyl-2-oxobutanoate hydroxymethyltransferase, found in Campylobacter jejuni subsp. jejuni serotype O:23/36 (strain 81-176).